A 495-amino-acid polypeptide reads, in one-letter code: UDP-N-acetylmuramoyl-L-alanyl-D-glutamate--2,6-diaminopimelate ligase (495 aa).

Residues Leu27, Ser29, and 44-46 contribute to the UDP-N-acetyl-alpha-D-muramoyl-L-alanyl-D-glutamate site; that span reads HQT. 116-122 is a binding site for ATP; the sequence is GTNGKTT. Residues Asn157, 158 to 159, Ser185, Gln191, and Arg193 each bind UDP-N-acetyl-alpha-D-muramoyl-L-alanyl-D-glutamate; that span reads TT. At Lys225 the chain carries N6-carboxylysine. Meso-2,6-diaminopimelate-binding positions include Arg390, 414-417, Gly465, and Glu469; that span reads DNPR. The Meso-diaminopimelate recognition motif signature appears at 414 to 417; it reads DNPR.

This sequence belongs to the MurCDEF family. MurE subfamily. Requires Mg(2+) as cofactor. In terms of processing, carboxylation is probably crucial for Mg(2+) binding and, consequently, for the gamma-phosphate positioning of ATP.

The protein resides in the cytoplasm. The catalysed reaction is UDP-N-acetyl-alpha-D-muramoyl-L-alanyl-D-glutamate + meso-2,6-diaminopimelate + ATP = UDP-N-acetyl-alpha-D-muramoyl-L-alanyl-gamma-D-glutamyl-meso-2,6-diaminopimelate + ADP + phosphate + H(+). It functions in the pathway cell wall biogenesis; peptidoglycan biosynthesis. Its function is as follows. Catalyzes the addition of meso-diaminopimelic acid to the nucleotide precursor UDP-N-acetylmuramoyl-L-alanyl-D-glutamate (UMAG) in the biosynthesis of bacterial cell-wall peptidoglycan. This is UDP-N-acetylmuramoyl-L-alanyl-D-glutamate--2,6-diaminopimelate ligase from Photorhabdus laumondii subsp. laumondii (strain DSM 15139 / CIP 105565 / TT01) (Photorhabdus luminescens subsp. laumondii).